The sequence spans 501 residues: Aldehyde dehydrogenase 1A1 (501 aa).

S2 is modified (N-acetylserine). N6-acetyllysine is present on residues K91 and K128. Residues 167–170, 193–196, 226–227, and 246–247 contribute to the NAD(+) site; these read IPWN, KPAE, GP, and GS. K252 is subject to N6-acetyllysine. Catalysis depends on E269, which acts as the Proton acceptor. NAD(+) is bound at residue 269–271; sequence ELG. The active-site Nucleophile is C303. Positions 336-501 are mediates interaction with PRMT3; the sequence is LTPGVSQGPQ…VTIKISQKNS (166 aa). T337 is subject to Phosphothreonine. 349–353 lines the NAD(+) pocket; sequence EQYEK. K353 and K367 each carry N6-acetyllysine. 400–402 contacts NAD(+); it reads EIF. Position 410 is an N6-acetyllysine (K410). Position 413 is a phosphoserine (S413). N6-acetyllysine occurs at positions 419 and 495.

This sequence belongs to the aldehyde dehydrogenase family. Homotetramer. Interacts with PRMT3; the interaction is direct, inhibits ALDH1A1 aldehyde dehydrogenase activity and is independent of the methyltransferase activity of PRMT3. Post-translationally, the N-terminus is blocked most probably by acetylation. As to expression, expressed in muscle, liver, small intestine, kidney, brain, lung, heart but not detected in erythrocytes (at protein level).

The protein localises to the cytoplasm. It is found in the cytosol. It localises to the cell projection. Its subcellular location is the axon. The enzyme catalyses an aldehyde + NAD(+) + H2O = a carboxylate + NADH + 2 H(+). It carries out the reaction all-trans-retinal + NAD(+) + H2O = all-trans-retinoate + NADH + 2 H(+). The catalysed reaction is 9-cis-retinal + NAD(+) + H2O = 9-cis-retinoate + NADH + 2 H(+). It catalyses the reaction 11-cis-retinal + NAD(+) + H2O = 11-cis-retinoate + NADH + 2 H(+). The enzyme catalyses 13-cis-retinal + NAD(+) + H2O = 13-cis-retinoate + NADH + 2 H(+). It carries out the reaction 3-deoxyglucosone + NAD(+) + H2O = 2-dehydro-3-deoxy-D-gluconate + NADH + 2 H(+). The catalysed reaction is (E)-4-hydroxynon-2-enal + NAD(+) + H2O = (E)-4-hydroxynon-2-enoate + NADH + 2 H(+). It catalyses the reaction malonaldehyde + NAD(+) + H2O = 3-oxopropanoate + NADH + 2 H(+). The enzyme catalyses hexanal + NAD(+) + H2O = hexanoate + NADH + 2 H(+). It carries out the reaction propanal + NAD(+) + H2O = propanoate + NADH + 2 H(+). The catalysed reaction is acetaldehyde + NAD(+) + H2O = acetate + NADH + 2 H(+). It catalyses the reaction benzaldehyde + NAD(+) + H2O = benzoate + NADH + 2 H(+). The enzyme catalyses 4-aminobutanal + NAD(+) + H2O = 4-aminobutanoate + NADH + 2 H(+). It functions in the pathway cofactor metabolism; retinol metabolism. Cytosolic dehydrogenase that catalyzes the irreversible oxidation of a wide range of aldehydes to their corresponding carboxylic acid. Functions downstream of retinol dehydrogenases and catalyzes the oxidation of retinaldehyde into retinoic acid, the second step in the oxidation of retinol/vitamin A into retinoic acid. This pathway is crucial to control the levels of retinol and retinoic acid, two important molecules which excess can be teratogenic and cytotoxic. Also oxidizes aldehydes resulting from lipid peroxidation like (E)-4-hydroxynon-2-enal/HNE, malonaldehyde and hexanal that form protein adducts and are highly cytotoxic. By participating for instance to the clearance of (E)-4-hydroxynon-2-enal/HNE in the lens epithelium prevents the formation of HNE-protein adducts and lens opacification. Also functions downstream of fructosamine-3-kinase in the fructosamine degradation pathway by catalyzing the oxidation of 3-deoxyglucosone, the carbohydrate product of fructosamine 3-phosphate decomposition, which is itself a potent glycating agent that may react with lysine and arginine side-chains of proteins. Also has an aminobutyraldehyde dehydrogenase activity and is probably part of an alternative pathway for the biosynthesis of GABA/4-aminobutanoate in midbrain, thereby playing a role in GABAergic synaptic transmission. This Bos taurus (Bovine) protein is Aldehyde dehydrogenase 1A1.